The primary structure comprises 422 residues: Chorismate synthase (422 aa).

Arginine 43 and arginine 49 together coordinate NADP(+). FMN-binding positions include arginine 143 to serine 145, glutamine 264 to alanine 265, glycine 309, lysine 324 to threonine 328, and arginine 350.

Belongs to the chorismate synthase family. In terms of assembly, homotetramer. It depends on FMNH2 as a cofactor.

It catalyses the reaction 5-O-(1-carboxyvinyl)-3-phosphoshikimate = chorismate + phosphate. The protein operates within metabolic intermediate biosynthesis; chorismate biosynthesis; chorismate from D-erythrose 4-phosphate and phosphoenolpyruvate: step 7/7. In terms of biological role, catalyzes the anti-1,4-elimination of the C-3 phosphate and the C-6 proR hydrogen from 5-enolpyruvylshikimate-3-phosphate (EPSP) to yield chorismate, which is the branch point compound that serves as the starting substrate for the three terminal pathways of aromatic amino acid biosynthesis. This reaction introduces a second double bond into the aromatic ring system. The sequence is that of Chorismate synthase from Corynebacterium jeikeium (strain K411).